A 356-amino-acid polypeptide reads, in one-letter code: cGAMP-activated phospholipase (356 aa).

The PNPLA domain maps to 15 to 206 (LSLNGGGARG…VANNPSYIGL (192 aa)). A GXGXXG motif is present at residues 19–24 (GGGARG). Positions 58–62 (GTSIG) match the GXSXG motif. The Nucleophile role is filled by Ser-60. The active-site Proton acceptor is Asp-193. Residues 193 to 195 (DGG) carry the DGA/G motif.

This sequence belongs to the patatin family.

The catalysed reaction is a 1,2-diacyl-sn-glycero-3-phosphocholine + H2O = a 2-acyl-sn-glycero-3-phosphocholine + a fatty acid + H(+). The enzyme catalyses 1,2-di-(9Z-octadecenoyl)-sn-glycero-3-phosphoethanolamine + 2 H2O = sn-glycero-3-phosphoethanolamine + 2 (9Z)-octadecenoate + 2 H(+). With respect to regulation, phospholipase activity is specifically activated upon 3',3'-cGAMP binding, which is produced by the cognate cyclic nucleotide synthase encoded in the same operon. In terms of biological role, effector phospholipase of a CBASS antiviral system. CBASS (cyclic oligonucleotide-based antiphage signaling system) provides immunity against bacteriophages. The CD-NTase protein (DncV) synthesizes cyclic nucleotides in response to infection; these serve as specific second messenger signals. The signals activate a diverse range of effectors, leading to bacterial cell death and thus abortive phage infection. A type II-A(GA) CBASS system. Phospholipase that is activated upon binding to the cyclic dinucleotide (CDN) second messenger 3',3'-cyclic GMP-AMP (cGAMP). Degrades phospholipids in the cell membrane. Its function is as follows. Protects E.coli against phage infection. When capV and dncV are introduced in E.coli MG1655 there is 1000-fold protection against phage P1; protection against other phage (T2, T4, T5, T6 and lambda-vir) requires the 2 subsequent genes (cap2 and cap3). Upon P1 phage infection the activating molecule is produced between 30 and 40 minutes. Activation leads to bacterial cell lysis and death, which occurs before the phage has finished its replication cycle, thus protecting non-infected bacteria by aborting the phage infection and preventing its propagation. In another paper the capV-dncV-cap2-cap3 operon gives 10(4)-10(5)-fold protection against phages lambda, T2, T4 and T6, about 1000-fold protection against P1 and 10-fold protection against T5. The protein is cGAMP-activated phospholipase of Escherichia coli (strain TW11681).